The following is a 788-amino-acid chain: Probable phosphoketolase 1 (788 aa).

The protein belongs to the XFP family. The cofactor is thiamine diphosphate.

The polypeptide is Probable phosphoketolase 1 (Lactiplantibacillus plantarum (strain ATCC BAA-793 / NCIMB 8826 / WCFS1) (Lactobacillus plantarum)).